The following is a 244-amino-acid chain: Inactive chemokine-binding protein (244 aa).

Residues 1-79 (MHVPASLQQS…STSVEDVDPP (79 aa)) are disordered. The segment covering 37-53 (QDQTPTNDKICQSVTEI) has biased composition (polar residues). The segment covering 54-77 (TESESDPDPEVESEDDSTSVEDVD) has biased composition (acidic residues).

It belongs to the orthopoxvirus OPG001 family.

It is found in the host cytoplasm. Its function is as follows. The protein is truncated in this vaccinal strain and presumably inactive, because the lack of signal peptide prevents the protein of being secreted. In the other strains inhibits host immune defense by binding to host chemokines. Binds host CC chemokines (beta chemokines) such as RANTES with high affinity, but not CXC or C chemokines (alpha and gamma chemokines). The sequence is that of Inactive chemokine-binding protein (OPG001) from Vaccinia virus (strain Copenhagen) (VACV).